A 281-amino-acid chain; its full sequence is CLA biosynthesis isomerase (281 aa).

This sequence belongs to the ADC family.

It is found in the cytoplasm. It carries out the reaction 10-oxo-(12Z)-octadecenoate = 10-oxo-(11E)-octadecenoate. The protein operates within lipid metabolism; fatty acid metabolism. Its function is as follows. Is involved in a saturation metabolic pathway of polyunsaturated fatty acids, that detoxifies unsaturated fatty acids and generates hydroxy fatty acids, oxo fatty acids, conjugated fatty acids such as conjugated linoleic acids (CLAs), and partially saturated trans-fatty acids as intermediates. CLA-DC catalyzes the migration of the carbon-carbon double bond in 10-oxo-(12Z)-octadecenoate to produce 10-oxo-(11E)-octadecenoate, during linoleate metabolism. As part of the gut microbiome, this enzyme modifies host fatty acid composition and is expected to improve human health by altering lipid metabolism related to the onset of metabolic syndrome. This is CLA biosynthesis isomerase from Lactiplantibacillus plantarum (Lactobacillus plantarum).